The chain runs to 513 residues: Bifunctional pantoate ligase/cytidylate kinase (513 aa).

The tract at residues 1 to 283 (MVQVFRTIAG…VGSTRLIDNL (283 aa)) is pantoate--beta-alanine ligase. ATP is bound at residue 30 to 37 (MGSLHAGH). Histidine 37 functions as the Proton donor in the catalytic mechanism. Residue glutamine 61 participates in (R)-pantoate binding. Glutamine 61 lines the beta-alanine pocket. Residue 150–153 (GAKD) participates in ATP binding. Glutamine 156 lines the (R)-pantoate pocket. ATP is bound by residues valine 179 and 187–190 (MSSR). A cytidylate kinase region spans residues 284–513 (VLNHRLPIIA…IELYKKYNKG (230 aa)).

In the N-terminal section; belongs to the pantothenate synthetase family. It in the C-terminal section; belongs to the cytidylate kinase family. Type 1 subfamily.

The protein localises to the cytoplasm. The enzyme catalyses (R)-pantoate + beta-alanine + ATP = (R)-pantothenate + AMP + diphosphate + H(+). It catalyses the reaction CMP + ATP = CDP + ADP. It carries out the reaction dCMP + ATP = dCDP + ADP. It participates in cofactor biosynthesis; (R)-pantothenate biosynthesis; (R)-pantothenate from (R)-pantoate and beta-alanine: step 1/1. Catalyzes the condensation of pantoate with beta-alanine in an ATP-dependent reaction via a pantoyl-adenylate intermediate. Its function is as follows. Catalyzes the transfer of a phosphate group from ATP to either CMP or dCMP to form CDP or dCDP and ADP, respectively. The sequence is that of Bifunctional pantoate ligase/cytidylate kinase from Synechocystis sp. (strain ATCC 27184 / PCC 6803 / Kazusa).